The primary structure comprises 365 residues: Aminotransferase poxL (365 aa).

Arg92 lines the pyridoxal 5'-phosphate pocket. Residue Lys193 is modified to N6-(pyridoxal phosphate)lysine. Glu229 serves as a coordination point for pyridoxal 5'-phosphate.

This sequence belongs to the class-IV pyridoxal-phosphate-dependent aminotransferase family. Pyridoxal 5'-phosphate is required as a cofactor.

It participates in secondary metabolite biosynthesis. In terms of biological role, aminotransferase; part of the gene cluster that mediates the biosynthesis of oxaleimides, cytotoxic compounds containing an unusual disubstituted succinimide moiety. The first step of the pathway is provided by the HR-PKS poxF that serves in a new mode of collaborative biosynthesis with the PKS-NRPS poxE, by providing the olefin containing amino acid substrate via the synthesis of an ACP-bound dec-4-enoate. The cytochrome P450 monooxygenase poxM-catalyzed oxidation at the alpha-position creates the enzyme-bound 2-hydroxydec-4-enoyl-ACP thioester, which may be prone to spontaneous hydrolysis to yield 2-hydroxydec-4-enoic acid due to increased electrophilicity of the carbonyl. 2-hydroxydec-4-enoic acid can then be further oxidized by poxM to yield the alpha-ketoacid 2-oxodec-4-enoicacid, which is reductively aminated by the aminotransferase poxL to yield (S,E)-2-aminodec-4-enoic acid. The Hybrid PKS-NRPS synthetase poxE then performs condensation between the octaketide product of its PKS modules and the amino group of (S,E)-2-aminodec-4-enoic acid which is activated and incorporated by the adenylation domain. The resulting aminoacyl product can be cyclized by the Diels-Alderase PoxQ and reductively released by the reductive (R) domain of poxE to yield an aldehyde intermediate. The released aldehyde is then substrate for a Knoevenagel condensation by the hydrolyase poxO followed by an oxidation at the 5-position of the pyrrolidone ring. The presence of the olefin from the amino acid building block allows for migration of the substituted allyl group to occur. This allylic transposition reaction takes place in a conjugate addition, semipinacol-like fashion to yield a succinimide intermediate. Iterative two-electron oxidations of the C7 methyl of the succinimide intermediate to the carboxylic acid can be catalyzed by one of two remaining cytochrome P450 monooxygenasess poxC or poxD to yield oxaleimide A. Subsequent oxidation yields the maleimide scaffold oxaleimide I. Both oxaleimide A and oxaleimide I can undergo oxidative modifications in the decalin ring to yield the series of products oxaleimides B to H. This Penicillium oxalicum protein is Aminotransferase poxL.